Consider the following 278-residue polypeptide: Octanoyl-[GcvH]:protein N-octanoyltransferase (278 aa).

Residues Leu-41 to His-247 enclose the BPL/LPL catalytic domain. The active-site Acyl-thioester intermediate is the Cys-146.

The protein belongs to the octanoyltransferase LipL family.

It catalyses the reaction N(6)-octanoyl-L-lysyl-[glycine-cleavage complex H protein] + L-lysyl-[lipoyl-carrier protein] = N(6)-octanoyl-L-lysyl-[lipoyl-carrier protein] + L-lysyl-[glycine-cleavage complex H protein]. Its pathway is protein modification; protein lipoylation via endogenous pathway; protein N(6)-(lipoyl)lysine from octanoyl-[acyl-carrier-protein]. Its function is as follows. Catalyzes the amidotransfer (transamidation) of the octanoyl moiety from octanoyl-GcvH to the lipoyl domain of the E2 subunit of lipoate-dependent enzymes. The protein is Octanoyl-[GcvH]:protein N-octanoyltransferase of Lysinibacillus sphaericus (strain C3-41).